A 355-amino-acid chain; its full sequence is Methylthioribose-1-phosphate isomerase (355 aa).

Residues 50–52 (RGA), Arg93, and Gln198 contribute to the substrate site. Asp239 serves as the catalytic Proton donor. 249 to 250 (NK) is a substrate binding site.

It belongs to the eIF-2B alpha/beta/delta subunits family. MtnA subfamily. In terms of assembly, homodimer.

It carries out the reaction 5-(methylsulfanyl)-alpha-D-ribose 1-phosphate = 5-(methylsulfanyl)-D-ribulose 1-phosphate. The protein operates within amino-acid biosynthesis; L-methionine biosynthesis via salvage pathway; L-methionine from S-methyl-5-thio-alpha-D-ribose 1-phosphate: step 1/6. Functionally, catalyzes the interconversion of methylthioribose-1-phosphate (MTR-1-P) into methylthioribulose-1-phosphate (MTRu-1-P). The protein is Methylthioribose-1-phosphate isomerase of Geobacillus thermodenitrificans (strain NG80-2).